The primary structure comprises 893 residues: Probable disease resistance protein At1g62630 (893 aa).

The stretch at 24-68 (GSYTHNLEKNLVALETTMEELKAKRDDLLRRLKREEDRGLQRLSE) forms a coiled coil. An NB-ARC domain is found at 136–440 (TEQASTSAFE…CEEIIDGSEG (305 aa)). Residue 179–186 (GMGGVGKT) coordinates ATP. LRR repeat units lie at residues 516 to 537 (VVRR…YECM), 538 to 559 (ELTT…SEIK), 571 to 593 (KLAV…ISNL), 595 to 617 (SLKY…QELK), 618 to 640 (KIIH…SSLH), and 641 to 663 (NLKV…KELE).

Belongs to the disease resistance NB-LRR family.

Functionally, probable disease resistance protein. The chain is Probable disease resistance protein At1g62630 from Arabidopsis thaliana (Mouse-ear cress).